Reading from the N-terminus, the 131-residue chain is Small ribosomal subunit protein bS6 (131 aa).

Residues 98–131 (EASPMVKAKDERRERREDFANETSEETEAGDSEE) form a disordered region. Basic and acidic residues predominate over residues 104–116 (KAKDERRERREDF). Residues 120-131 (TSEETEAGDSEE) are compositionally biased toward acidic residues.

The protein belongs to the bacterial ribosomal protein bS6 family.

Its function is as follows. Binds together with bS18 to 16S ribosomal RNA. This is Small ribosomal subunit protein bS6 from Edwardsiella ictaluri (strain 93-146).